We begin with the raw amino-acid sequence, 298 residues long: GTPase Era (298 aa).

The Era-type G domain maps to 3–170 (KSGFVAILGR…VQLLKDNLEE (168 aa)). Residues 11-18 (GRPNVGKS) are G1. 11–18 (GRPNVGKS) provides a ligand contact to GTP. The G2 stretch occupies residues 37 to 41 (QTTRN). The segment at 58–61 (DTPG) is G3. GTP contacts are provided by residues 58–62 (DTPGI) and 120–123 (NKID). A G4 region spans residues 120-123 (NKID). The segment at 149-151 (ISA) is G5. One can recognise a KH type-2 domain in the interval 201-279 (TQQEVPHSVA…YLETWVKVKK (79 aa)).

The protein belongs to the TRAFAC class TrmE-Era-EngA-EngB-Septin-like GTPase superfamily. Era GTPase family. In terms of assembly, monomer.

The protein resides in the cytoplasm. It is found in the cell membrane. In terms of biological role, an essential GTPase that binds both GDP and GTP, with rapid nucleotide exchange. Plays a role in 16S rRNA processing and 30S ribosomal subunit biogenesis and possibly also in cell cycle regulation and energy metabolism. The sequence is that of GTPase Era from Streptococcus equi subsp. equi (strain 4047).